Here is a 226-residue protein sequence, read N- to C-terminus: ATP-dependent dethiobiotin synthetase BioD (226 aa).

Residue 13–18 (DVGKTV) participates in ATP binding. Position 17 (threonine 17) interacts with Mg(2+). Lysine 38 is a catalytic residue. Residues aspartate 55, 116–119 (EGAG), and 176–177 (NR) contribute to the ATP site. Residues aspartate 55 and glutamate 116 each contribute to the Mg(2+) site.

This sequence belongs to the dethiobiotin synthetase family. Homodimer. Requires Mg(2+) as cofactor.

Its subcellular location is the cytoplasm. It catalyses the reaction (7R,8S)-7,8-diammoniononanoate + CO2 + ATP = (4R,5S)-dethiobiotin + ADP + phosphate + 3 H(+). It functions in the pathway cofactor biosynthesis; biotin biosynthesis; biotin from 7,8-diaminononanoate: step 1/2. Its function is as follows. Catalyzes a mechanistically unusual reaction, the ATP-dependent insertion of CO2 between the N7 and N8 nitrogen atoms of 7,8-diaminopelargonic acid (DAPA, also called 7,8-diammoniononanoate) to form a ureido ring. The protein is ATP-dependent dethiobiotin synthetase BioD of Aliivibrio fischeri (strain MJ11) (Vibrio fischeri).